Reading from the N-terminus, the 279-residue chain is Movement protein (279 aa).

Positions 246–279 (SESEELNVESPPAAIGSSSASRSEAFRPQVVNGL) are disordered. Low complexity predominate over residues 254–268 (ESPPAAIGSSSASRS).

The protein belongs to the cucumovirus movement protein family.

It is found in the host cell junction. It localises to the host plasmodesma. In terms of biological role, transports viral genome to neighboring plant cells directly through plasmosdesmata, without any budding. The movement protein allows efficient cell to cell propagation, by bypassing the host cell wall barrier. Acts by forming a tubular structure at the host plasmodesmata, enlarging it enough to allow free passage of virion capsids. In Cucumber mosaic virus (strain N) (CMV), this protein is Movement protein.